The primary structure comprises 202 residues: Protein G1-like4 (202 aa).

Disordered regions lie at residues 1–44 (MDLS…RYEA) and 158–202 (RARG…GAAC). Gly residues predominate over residues 12-22 (SGGGNGGGGGS). Residues 23–36 (SSSNSSPSMGAGAP) are compositionally biased toward low complexity. Residues 41–168 (RYEAQKRRDW…ARGVSYEKKK (128 aa)) enclose the ALOG domain. Positions 166 to 170 (KKKRK) match the Nuclear localization signal motif. Positions 173–186 (QQQQLQGGDSSGLH) are enriched in low complexity. Pro residues predominate over residues 192 to 202 (PPPPPPAGAAC).

It belongs to the plant homeotic and developmental regulators ALOG protein family.

Its subcellular location is the nucleus. Probable transcription regulator that acts as a developmental regulator by promoting cell growth in response to light. This is Protein G1-like4 from Oryza sativa subsp. indica (Rice).